The following is a 138-amino-acid chain: ATP synthase epsilon chain, chloroplastic (138 aa).

It belongs to the ATPase epsilon chain family. F-type ATPases have 2 components, CF(1) - the catalytic core - and CF(0) - the membrane proton channel. CF(1) has five subunits: alpha(3), beta(3), gamma(1), delta(1), epsilon(1). CF(0) has three main subunits: a, b and c.

Its subcellular location is the plastid. It localises to the chloroplast thylakoid membrane. Its function is as follows. Produces ATP from ADP in the presence of a proton gradient across the membrane. The polypeptide is ATP synthase epsilon chain, chloroplastic (Anthoceros angustus (Hornwort)).